A 101-amino-acid chain; its full sequence is Trp operon repressor homolog (101 aa).

Residues 59–82 mediate DNA binding; it reads QREIQQNLNTSAATITRGSNMIKT.

This sequence belongs to the TrpR family. Homodimer.

Its subcellular location is the cytoplasm. Functionally, this protein is an aporepressor. When complexed with L-tryptophan it binds the operator region of the trp operon and prevents the initiation of transcription. The polypeptide is Trp operon repressor homolog (Haemophilus influenzae (strain 86-028NP)).